Consider the following 283-residue polypeptide: Acetylglutamate kinase (283 aa).

Substrate-binding positions include 63-64 (GG), Arg-85, and Asn-179.

The protein belongs to the acetylglutamate kinase family. ArgB subfamily.

It is found in the cytoplasm. It carries out the reaction N-acetyl-L-glutamate + ATP = N-acetyl-L-glutamyl 5-phosphate + ADP. The protein operates within amino-acid biosynthesis; L-arginine biosynthesis; N(2)-acetyl-L-ornithine from L-glutamate: step 2/4. Catalyzes the ATP-dependent phosphorylation of N-acetyl-L-glutamate. The protein is Acetylglutamate kinase of Clostridium kluyveri (strain NBRC 12016).